Reading from the N-terminus, the 2715-residue chain is G surface protein, allelic form 156 (2715 aa).

Positions 1-20 (MNNKFIIFSLLLALVASQTY) are cleaved as a signal peptide. 34 PSA repeats span residues 111-171 (KTLD…NTCD), 177-237 (FATD…RICD), 243-303 (LTTD…KACA), 309-366 (IATN…KTCA), 372-404 (NNTH…APTT), 405-467 (MTTN…KTCV), 473-530 (NTTH…KQCV), 536-596 (TTTH…KACS), 602-673 (FTTT…KSCA), 688-748 (GFTF…KTCA), 752-812 (QTTH…ATCA), 820-895 (YDSD…GACT), 934-1001 (GLTF…AECA), 1008-1067 (GLDH…SNCA), 1073-1141 (GLTT…THCP), 1147-1215 (GLTD…TECA), 1221-1289 (GLTD…TECA), 1295-1363 (GLTN…TECA), 1369-1437 (GLTN…TECA), 1443-1507 (GLTK…LNCS), 1513-1578 (GFVH…TDCA), 1586-1652 (TITF…ATCD), 1693-1751 (TFNH…KTCD), 1759-1819 (RDDD…LNCG), 1827-1898 (YDTH…KSCT), 1904-1976 (TTTH…KSCA), 1984-2044 (YDDD…KSCD), 2080-2149 (FATD…KNCS), 2155-2215 (LTSE…KDCQ), 2219-2286 (GTTH…TSCK), 2290-2355 (WNND…TSCA), 2359-2430 (YTTH…QSCA), 2434-2500 (GTTH…LTCA), and 2505-2573 (GTAT…TACT).

It localises to the cell membrane. This protein is the surface antigen or immobilization antigen of Paramecium primaurelia. The polypeptide is G surface protein, allelic form 156 (156G) (Paramecium primaurelia).